A 284-amino-acid chain; its full sequence is Diaminopimelate epimerase (284 aa).

Residues Asn20, Gln53, and Asn73 each coordinate substrate. The active-site Proton donor is the Cys82. Residues 83–84 (GN), Asn167, Asn200, and 218–219 (ER) each bind substrate. Catalysis depends on Cys227, which acts as the Proton acceptor. A substrate-binding site is contributed by 228–229 (GS).

This sequence belongs to the diaminopimelate epimerase family. Homodimer.

It is found in the cytoplasm. The catalysed reaction is (2S,6S)-2,6-diaminopimelate = meso-2,6-diaminopimelate. It functions in the pathway amino-acid biosynthesis; L-lysine biosynthesis via DAP pathway; DL-2,6-diaminopimelate from LL-2,6-diaminopimelate: step 1/1. In terms of biological role, catalyzes the stereoinversion of LL-2,6-diaminopimelate (L,L-DAP) to meso-diaminopimelate (meso-DAP), a precursor of L-lysine and an essential component of the bacterial peptidoglycan. The chain is Diaminopimelate epimerase from Xanthomonas axonopodis pv. citri (strain 306).